The sequence spans 464 residues: MKRFMDEDFLLNNQTAKVLYEKYAKDMPIIDFHCHLNPKEIYENKKFRNITEVWLGGDHYKWRLMRANGIEEKYITGSADDYEKFLAWAKTIPMAIGNPIYHWTHLELKRYFGIDEILNEKSAPIIWEKANKVLEELGARDIILKSNVEVICTTDDPVDTLEYHLKLKDDKNFNVKVYPTFRPDKGVNIERETFIPWVEKLGEVYGKKIESYDEFLDALKSRAEFFHSVGCRASDHAIDNMVFAEASFDEVANIFKKALAGEKLTEIEVAKYKTYTLRFLGKVYSSLGWAMQLHINALRNNNTRMFNILGPDTGYDSINDGHIALALVKFLDSLEKENSLPKTILYSLNPKDNYVLATIMGSFQDGSIPGKMQLGAAWWFNDSKDGNLQQMKDLANLGLLSRFVGMVTDSRSFLSYARHEYFRRLLCKLIGEWVENGEYPYDLEALSRIVQGVCYYNAKEYFGF.

This sequence belongs to the metallo-dependent hydrolases superfamily. Uronate isomerase family.

The catalysed reaction is D-glucuronate = D-fructuronate. It catalyses the reaction aldehydo-D-galacturonate = keto-D-tagaturonate. Its pathway is carbohydrate metabolism; pentose and glucuronate interconversion. The sequence is that of Uronate isomerase from Caldicellulosiruptor saccharolyticus (strain ATCC 43494 / DSM 8903 / Tp8T 6331).